Reading from the N-terminus, the 301-residue chain is Quinolinate synthase (301 aa).

2 residues coordinate iminosuccinate: His21 and Ser38. Position 83 (Cys83) interacts with [4Fe-4S] cluster. Iminosuccinate-binding positions include 109–111 and Ser126; that span reads YIN. Cys169 provides a ligand contact to [4Fe-4S] cluster. Residues 195-197 and Thr212 contribute to the iminosuccinate site; that span reads HPE. Residue Cys257 participates in [4Fe-4S] cluster binding.

The protein belongs to the quinolinate synthase family. Type 2 subfamily. [4Fe-4S] cluster serves as cofactor.

It is found in the cytoplasm. The enzyme catalyses iminosuccinate + dihydroxyacetone phosphate = quinolinate + phosphate + 2 H2O + H(+). The protein operates within cofactor biosynthesis; NAD(+) biosynthesis; quinolinate from iminoaspartate: step 1/1. In terms of biological role, catalyzes the condensation of iminoaspartate with dihydroxyacetone phosphate to form quinolinate. The polypeptide is Quinolinate synthase (Clostridium perfringens (strain ATCC 13124 / DSM 756 / JCM 1290 / NCIMB 6125 / NCTC 8237 / Type A)).